The primary structure comprises 293 residues: Pyridoxal 5'-phosphate synthase subunit PdxS (293 aa).

Asp23 serves as a coordination point for D-ribose 5-phosphate. Lys80 (schiff-base intermediate with D-ribose 5-phosphate) is an active-site residue. Gly152 is a D-ribose 5-phosphate binding site. Arg164 contacts D-glyceraldehyde 3-phosphate. Residues Gly213 and 234-235 (GS) contribute to the D-ribose 5-phosphate site.

Belongs to the PdxS/SNZ family. In the presence of PdxT, forms a dodecamer of heterodimers.

It carries out the reaction aldehydo-D-ribose 5-phosphate + D-glyceraldehyde 3-phosphate + L-glutamine = pyridoxal 5'-phosphate + L-glutamate + phosphate + 3 H2O + H(+). It functions in the pathway cofactor biosynthesis; pyridoxal 5'-phosphate biosynthesis. Its function is as follows. Catalyzes the formation of pyridoxal 5'-phosphate from ribose 5-phosphate (RBP), glyceraldehyde 3-phosphate (G3P) and ammonia. The ammonia is provided by the PdxT subunit. Can also use ribulose 5-phosphate and dihydroxyacetone phosphate as substrates, resulting from enzyme-catalyzed isomerization of RBP and G3P, respectively. This is Pyridoxal 5'-phosphate synthase subunit PdxS from Chloroflexus aggregans (strain MD-66 / DSM 9485).